The following is a 213-amino-acid chain: Small ribosomal subunit protein uS3 (213 aa).

The KH type-2 domain occupies 38-106 (IRAFVKKLLY…EFSLEVNEIR (69 aa)).

Belongs to the universal ribosomal protein uS3 family. In terms of assembly, part of the 30S ribosomal subunit. Forms a tight complex with proteins S10 and S14.

Its function is as follows. Binds the lower part of the 30S subunit head. Binds mRNA in the 70S ribosome, positioning it for translation. The chain is Small ribosomal subunit protein uS3 from Desulfovibrio desulfuricans (strain ATCC 27774 / DSM 6949 / MB).